Reading from the N-terminus, the 339-residue chain is 4-hydroxy-2-oxovalerate aldolase 3 (339 aa).

A Pyruvate carboxyltransferase domain is found at 7-259; that stretch reads IRVTDTSLRD…KTGIDFFAIA (253 aa). 15-16 lines the substrate pocket; it reads RD. Asp16 is a binding site for Mn(2+). The Proton acceptor role is filled by His19. Residues Ser169 and His198 each coordinate substrate. Positions 198 and 200 each coordinate Mn(2+). Position 289 (Tyr289) interacts with substrate.

Belongs to the 4-hydroxy-2-oxovalerate aldolase family.

The enzyme catalyses (S)-4-hydroxy-2-oxopentanoate = acetaldehyde + pyruvate. The chain is 4-hydroxy-2-oxovalerate aldolase 3 from Rhodococcus opacus (strain B4).